The chain runs to 257 residues: Lysine-rich coiled-coil protein 1 (257 aa).

A disordered region spans residues 145 to 257; that stretch reads NTSAHQASYK…MLWDQSILGF (113 aa). Residues 152–162 are compositionally biased toward basic residues; the sequence is SYKHIHQKRKR. Composition is skewed to basic and acidic residues over residues 163–176, 183–193, 200–212, and 219–228; these read HTEE…EERP, ACEEIDLDKYK, TEAE…TEKL, and RSRDVASKKE. Positions 210-248 form a coiled coil; sequence EKLKNRKEKRSRDVASKKEERKRRKEKKEQGQERTEEEM.

This is Lysine-rich coiled-coil protein 1 (KRCC1) from Bos taurus (Bovine).